A 1115-amino-acid polypeptide reads, in one-letter code: Lateral signaling target protein 2 homolog (1115 aa).

Disordered stretches follow at residues 308-488, 545-586, 600-742, and 879-1027; these read PLGS…DSDS, SEDD…PSTS, RLPS…SLSD, and VQSS…PDGK. Positions 322 to 361 are enriched in low complexity; it reads NNSSSTTNTSNNNNNNTNNNNSSSGSDCTNNDKTGTTTNT. Basic and acidic residues predominate over residues 363–373; sequence KPVERLVDHRN. Composition is skewed to low complexity over residues 374–417 and 425–444; these read NNTT…TPTA and PSHSIASTSSAATTSTNSPA. Residues 449-488 show a composition bias toward acidic residues; sequence YDDDDEDDDDDDVHADVEEDEDESGILDSDEHDLNDDSDS. Low complexity-rich tracts occupy residues 558-577 and 600-614; these read QQQQPQQQLEHHQQQLQQQQ and RLPSSSSDNEPSSNN. Phosphoserine occurs at positions 603 and 604. A compositionally biased stretch (polar residues) spans 615 to 628; that stretch reads QQMTIKSPSEQTTT. A compositionally biased stretch (basic residues) spans 632-655; sequence SNRHRHHSHHHHHHHHSHHHHHHQ. The span at 658–676 shows a compositional bias: low complexity; the sequence is AAVAVAAAQDEQHNNNQPH. The span at 677-706 shows a compositional bias: basic residues; sequence SHSHSSSHHHHHNHQSHSHPHRANRSTRKR. Low complexity-rich tracts occupy residues 714–726, 733–742, and 881–901; these read TITTTKTTSGGEQ, DSSTASSLSD, and SSNSGNSSSSNSSSSSSAARS. Position 908 is a phosphoserine (Ser908). Low complexity-rich tracts occupy residues 921–975 and 988–1020; these read QQQQ…SPVS and TTTTLSTSIGTAATTPTGATTTGVTTTTTMSPP. Residues 1025-1085 form an FYVE-type zinc finger; the sequence is DGKAPRCMSC…VCRECFMREV (61 aa). The Zn(2+) site is built by Cys1031, Cys1034, Cys1047, Cys1050, Cys1055, Cys1058, Cys1077, and Cys1080. The interval 1088 to 1115 is disordered; that stretch reads SHSHGQSQSQIHSPTQQAGGRPQAASAS. A compositionally biased stretch (low complexity) spans 1090-1100; that stretch reads SHGQSQSQIHS.

This sequence belongs to the lst-2 family.

In terms of biological role, negative regulator of epidermal growth factor receptor (EGFR) signaling. The sequence is that of Lateral signaling target protein 2 homolog from Drosophila grimshawi (Hawaiian fruit fly).